The chain runs to 98 residues: NADH-ubiquinone oxidoreductase chain 4L (98 aa).

Transmembrane regions (helical) follow at residues 1 to 21 (MTMV…GLLM), 29 to 49 (SLLC…VTIL), and 61 to 81 (IILL…LVMV).

It belongs to the complex I subunit 4L family. As to quaternary structure, core subunit of respiratory chain NADH dehydrogenase (Complex I) which is composed of 45 different subunits.

It localises to the mitochondrion inner membrane. The enzyme catalyses a ubiquinone + NADH + 5 H(+)(in) = a ubiquinol + NAD(+) + 4 H(+)(out). Core subunit of the mitochondrial membrane respiratory chain NADH dehydrogenase (Complex I) which catalyzes electron transfer from NADH through the respiratory chain, using ubiquinone as an electron acceptor. Part of the enzyme membrane arm which is embedded in the lipid bilayer and involved in proton translocation. This is NADH-ubiquinone oxidoreductase chain 4L (MT-ND4L) from Neomonachus schauinslandi (Hawaiian monk seal).